The sequence spans 307 residues: UAP56-interacting factor (307 aa).

A compositionally biased stretch (low complexity) spans 1–25 (MSGFGAAALLSGSSAAAGTRSGSSD). Disordered stretches follow at residues 1–28 (MSGFGAAALLSGSSAAAGTRSGSSDSLE) and 41–85 (NKKE…KNHL). The short motif at 26 to 44 (SLEKIDMSLDDIIKLNKKE) is the UAP56-binding motif element. Residues 57–78 (LQQNRTQQFRTPGSKWGIQQQK) are compositionally biased toward polar residues.

Belongs to the UIF family. Widely expressed.

It is found in the nucleus. Its subcellular location is the nucleoplasm. The protein localises to the nucleus speckle. Functionally, required for mRNA export from the nucleus to the cytoplasm. Acts as an adapter that uses the DDX39B/UAP56-NFX1 pathway to ensure efficient mRNA export and delivering to the nuclear pore. The chain is UAP56-interacting factor (FYTTD1) from Gallus gallus (Chicken).